The following is a 986-amino-acid chain: LRR receptor-like serine/threonine-protein kinase ER2 (986 aa).

A signal peptide spans 1 to 21 (MTTTTTTRLLLAAILLAVAAA). The Extracellular portion of the chain corresponds to 22–581 (DDDGQTLLEI…VQRSSVSRSA (560 aa)). Residues Asn64 and Asn73 are each glycosylated (N-linked (GlcNAc...) asparagine). LRR repeat units lie at residues 68 to 89 (AVAALNLSGLNLGGEISPAIGN), 90 to 114 (LKSVESIDLKSNELSGQIPDEIGDC), 116 to 138 (SLKTLDLSSNNLGGDIPFSISKL), 139 to 161 (KHLENLILKNNQLVGMIPSTLSQ), 162 to 186 (LPNLKILDLAQNKLNGEIPRLIYWN), 188 to 210 (VLQYLGLRSNNLEGSLSPEMCQL), 211 to 233 (TGLWYFDVKNNSLTGIIPDTIGN), 234 to 259 (CTSFQVLDLSYNRLTGEIPFNIGFLQ), 261 to 280 (ATLSLQGNNFSGPIPSVIGL), 281 to 304 (MQALAVLDLSFNQLSGPIPSILGN), 306 to 329 (TYTEKLYLQGNRLTGSIPPELGNM), 330 to 352 (STLHYLELNDNQLTGFIPPELGK), 354 to 377 (TGLFDLNLANNNLEGPIPDNISSC), 379 to 401 (NLISFNAYGNKLNGTVPRSLHKL), 402 to 425 (ESITYLNLSSNYLSGAIPIELAKM), 427 to 449 (NLDTLDLSCNMVAGPIPSAIGSL), 450 to 472 (EHLLRLNFSNNNLVGYIPAEFGN), 473 to 498 (LRSIMEIDLSSNHLGGLIPQEVGMLQ), 500 to 520 (LILLKLESNNITGDVSSLINC), and 521 to 545 (FSLNVLNVSYNNLAGIVPTDNNFSR). Residues Asn220 and Asn233 are each glycosylated (N-linked (GlcNAc...) asparagine). N-linked (GlcNAc...) asparagine glycans are attached at residues Asn269, Asn304, and Asn328. Asn373, Asn391, and Asn408 each carry an N-linked (GlcNAc...) asparagine glycan. Residue Asn456 is glycosylated (N-linked (GlcNAc...) asparagine). Asn509, Asn527, and Asn542 each carry an N-linked (GlcNAc...) asparagine glycan. The helical transmembrane segment at 582 to 602 (ILGIAVAGLVILLMILAAACW) threads the bilayer. Residues 603–986 (PHWAQVPKDV…FGEVISQNTE (384 aa)) lie on the Cytoplasmic side of the membrane. The region spanning 653–934 (LSEKYIIGYG…YPDPPSKPAL (282 aa)) is the Protein kinase domain. Residues 659-667 (IGYGASSTV) and Lys681 contribute to the ATP site. Residue Asp779 is the Proton acceptor of the active site.

The protein belongs to the protein kinase superfamily. Ser/Thr protein kinase family.

The protein resides in the cell membrane. The catalysed reaction is L-seryl-[protein] + ATP = O-phospho-L-seryl-[protein] + ADP + H(+). It carries out the reaction L-threonyl-[protein] + ATP = O-phospho-L-threonyl-[protein] + ADP + H(+). Functionally, receptor kinase that may be involved in the regulation of cell proliferation and cell growth. The sequence is that of LRR receptor-like serine/threonine-protein kinase ER2 from Oryza sativa subsp. japonica (Rice).